The primary structure comprises 1004 residues: Presequence protease, mitochondrial (1004 aa).

A mitochondrion-targeting transit peptide spans 1-34 (MLRNAAAGARKAVTELSQFPKPGEKLHGFTLVRS). Residue histidine 84 coordinates Zn(2+). The Proton acceptor role is filled by glutamate 87. Residue histidine 88 participates in Zn(2+) binding. Glutamate 160 is a catalytic residue. Glutamate 188 serves as a coordination point for Zn(2+).

It belongs to the peptidase M16 family. PreP subfamily. Monomer and homodimer; homodimerization is induced by binding of the substrate. Zn(2+) serves as cofactor.

The protein localises to the mitochondrion intermembrane space. The protein resides in the mitochondrion matrix. In terms of biological role, degrades mitochondrial transit peptides after their cleavage in the intermembrane space or in the matrix, and presequence peptides; clearance of these peptides is required to keep the presequence processing machinery running. Preferentially cleaves the N-terminal side of paired basic amino acid residues. Also degrades other unstructured peptides. May function as an ATP-dependent peptidase as opposed to a metalloendopeptidase. This chain is Presequence protease, mitochondrial (CYM1), found in Gibberella zeae (strain ATCC MYA-4620 / CBS 123657 / FGSC 9075 / NRRL 31084 / PH-1) (Wheat head blight fungus).